The primary structure comprises 157 residues: 6,7-dimethyl-8-ribityllumazine synthase (157 aa).

5-amino-6-(D-ribitylamino)uracil-binding positions include F24, 58 to 60 (SFE), and 82 to 84 (AVI). 87-88 (ET) contributes to the (2S)-2-hydroxy-3-oxobutyl phosphate binding site. H90 serves as the catalytic Proton donor. A 5-amino-6-(D-ribitylamino)uracil-binding site is contributed by F115. Residue R129 coordinates (2S)-2-hydroxy-3-oxobutyl phosphate.

The protein belongs to the DMRL synthase family.

It catalyses the reaction (2S)-2-hydroxy-3-oxobutyl phosphate + 5-amino-6-(D-ribitylamino)uracil = 6,7-dimethyl-8-(1-D-ribityl)lumazine + phosphate + 2 H2O + H(+). The protein operates within cofactor biosynthesis; riboflavin biosynthesis; riboflavin from 2-hydroxy-3-oxobutyl phosphate and 5-amino-6-(D-ribitylamino)uracil: step 1/2. Catalyzes the formation of 6,7-dimethyl-8-ribityllumazine by condensation of 5-amino-6-(D-ribitylamino)uracil with 3,4-dihydroxy-2-butanone 4-phosphate. This is the penultimate step in the biosynthesis of riboflavin. The sequence is that of 6,7-dimethyl-8-ribityllumazine synthase from Thermus thermophilus (strain ATCC BAA-163 / DSM 7039 / HB27).